A 450-amino-acid chain; its full sequence is ATP-dependent protease ATPase subunit HslU (450 aa).

ATP-binding positions include valine 27, 69–74, aspartate 263, glutamate 328, and arginine 400; that span reads GVGKTE.

The protein belongs to the ClpX chaperone family. HslU subfamily. In terms of assembly, a double ring-shaped homohexamer of HslV is capped on each side by a ring-shaped HslU homohexamer. The assembly of the HslU/HslV complex is dependent on binding of ATP.

It localises to the cytoplasm. Its function is as follows. ATPase subunit of a proteasome-like degradation complex; this subunit has chaperone activity. The binding of ATP and its subsequent hydrolysis by HslU are essential for unfolding of protein substrates subsequently hydrolyzed by HslV. HslU recognizes the N-terminal part of its protein substrates and unfolds these before they are guided to HslV for hydrolysis. This Aquifex aeolicus (strain VF5) protein is ATP-dependent protease ATPase subunit HslU.